The chain runs to 146 residues: MRNKVLIVLAVIAGALILKSCGEPYSGAKETVGEFMEEIAEGEGRDAIKYLYPAYRDELAKNFKLPVQFTEMKPSEVLACVLSTMGRNIDEVEIKKAIAVNPNTANVVVKVEDKEGIEKFFSFTVVKEGDKWYIAKIEKYIPQVGR.

This is an uncharacterized protein from Aquifex aeolicus (strain VF5).